A 444-amino-acid chain; its full sequence is Ubiquitin carboxyl-terminal hydrolase MINDY-3 (444 aa).

The Nucleophile role is filled by Cys51. Phosphoserine is present on Ser124. The Proton acceptor role is filled by His286.

This sequence belongs to the MINDY deubiquitinase family. FAM188 subfamily. Interacts with COPS5.

It localises to the nucleus. The enzyme catalyses Thiol-dependent hydrolysis of ester, thioester, amide, peptide and isopeptide bonds formed by the C-terminal Gly of ubiquitin (a 76-residue protein attached to proteins as an intracellular targeting signal).. In terms of biological role, hydrolase that can remove 'Lys-48'-linked conjugated ubiquitin from proteins. This is Ubiquitin carboxyl-terminal hydrolase MINDY-3 from Mus musculus (Mouse).